Consider the following 367-residue polypeptide: Chorismate synthase (367 aa).

The tract at residues 39–60 (EEFSHDLQRRASGKSRHTSARR) is disordered. Residues arginine 48 and arginine 54 each contribute to the NADP(+) site. FMN contacts are provided by residues 125–127 (RSS), 238–239 (NA), glycine 278, 293–297 (KPTSS), and arginine 319.

It belongs to the chorismate synthase family. As to quaternary structure, homotetramer. The cofactor is FMNH2.

The enzyme catalyses 5-O-(1-carboxyvinyl)-3-phosphoshikimate = chorismate + phosphate. It functions in the pathway metabolic intermediate biosynthesis; chorismate biosynthesis; chorismate from D-erythrose 4-phosphate and phosphoenolpyruvate: step 7/7. Functionally, catalyzes the anti-1,4-elimination of the C-3 phosphate and the C-6 proR hydrogen from 5-enolpyruvylshikimate-3-phosphate (EPSP) to yield chorismate, which is the branch point compound that serves as the starting substrate for the three terminal pathways of aromatic amino acid biosynthesis. This reaction introduces a second double bond into the aromatic ring system. The polypeptide is Chorismate synthase (Xanthomonas oryzae pv. oryzae (strain MAFF 311018)).